Here is a 373-residue protein sequence, read N- to C-terminus: UDP-N-acetylglucosamine--N-acetylmuramyl-(pentapeptide) pyrophosphoryl-undecaprenol N-acetylglucosamine transferase (373 aa).

UDP-N-acetyl-alpha-D-glucosamine is bound by residues T10–G12, N124, S195, and Q297.

This sequence belongs to the glycosyltransferase 28 family. MurG subfamily.

The protein localises to the cell membrane. It catalyses the reaction Mur2Ac(oyl-L-Ala-gamma-D-Glu-L-Lys-D-Ala-D-Ala)-di-trans,octa-cis-undecaprenyl diphosphate + UDP-N-acetyl-alpha-D-glucosamine = beta-D-GlcNAc-(1-&gt;4)-Mur2Ac(oyl-L-Ala-gamma-D-Glu-L-Lys-D-Ala-D-Ala)-di-trans,octa-cis-undecaprenyl diphosphate + UDP + H(+). It functions in the pathway cell wall biogenesis; peptidoglycan biosynthesis. Functionally, cell wall formation. Catalyzes the transfer of a GlcNAc subunit on undecaprenyl-pyrophosphoryl-MurNAc-pentapeptide (lipid intermediate I) to form undecaprenyl-pyrophosphoryl-MurNAc-(pentapeptide)GlcNAc (lipid intermediate II). The polypeptide is UDP-N-acetylglucosamine--N-acetylmuramyl-(pentapeptide) pyrophosphoryl-undecaprenol N-acetylglucosamine transferase (Oenococcus oeni (strain ATCC BAA-331 / PSU-1)).